The chain runs to 301 residues: Sulfate adenylyltransferase subunit 2 (301 aa).

Residues 279–301 form a disordered region; the sequence is RQGRLIDHDQDGSMEKKKQEGYF.

The protein belongs to the PAPS reductase family. CysD subfamily. As to quaternary structure, heterodimer composed of CysD, the smaller subunit, and CysN.

It catalyses the reaction sulfate + ATP + H(+) = adenosine 5'-phosphosulfate + diphosphate. The protein operates within sulfur metabolism; hydrogen sulfide biosynthesis; sulfite from sulfate: step 1/3. Its function is as follows. With CysN forms the ATP sulfurylase (ATPS) that catalyzes the adenylation of sulfate producing adenosine 5'-phosphosulfate (APS) and diphosphate, the first enzymatic step in sulfur assimilation pathway. APS synthesis involves the formation of a high-energy phosphoric-sulfuric acid anhydride bond driven by GTP hydrolysis by CysN coupled to ATP hydrolysis by CysD. The chain is Sulfate adenylyltransferase subunit 2 from Geotalea uraniireducens (strain Rf4) (Geobacter uraniireducens).